The following is a 399-amino-acid chain: 4-hydroxy-3-methylbut-2-enyl diphosphate reductase (399 aa).

Cysteine 66 serves as a coordination point for [4Fe-4S] cluster. Histidine 96 serves as a coordination point for (2E)-4-hydroxy-3-methylbut-2-enyl diphosphate. Histidine 96 lines the dimethylallyl diphosphate pocket. Isopentenyl diphosphate is bound at residue histidine 96. Cysteine 157 lines the [4Fe-4S] cluster pocket. Histidine 185 contributes to the (2E)-4-hydroxy-3-methylbut-2-enyl diphosphate binding site. Position 185 (histidine 185) interacts with dimethylallyl diphosphate. Histidine 185 contributes to the isopentenyl diphosphate binding site. The active-site Proton donor is the glutamate 187. Threonine 250 contributes to the (2E)-4-hydroxy-3-methylbut-2-enyl diphosphate binding site. Cysteine 288 serves as a coordination point for [4Fe-4S] cluster. (2E)-4-hydroxy-3-methylbut-2-enyl diphosphate contacts are provided by serine 317, serine 318, asparagine 319, and serine 380. 4 residues coordinate dimethylallyl diphosphate: serine 317, serine 318, asparagine 319, and serine 380. Residues serine 317, serine 318, asparagine 319, and serine 380 each contribute to the isopentenyl diphosphate site.

This sequence belongs to the IspH family. Requires [4Fe-4S] cluster as cofactor.

It catalyses the reaction isopentenyl diphosphate + 2 oxidized [2Fe-2S]-[ferredoxin] + H2O = (2E)-4-hydroxy-3-methylbut-2-enyl diphosphate + 2 reduced [2Fe-2S]-[ferredoxin] + 2 H(+). It carries out the reaction dimethylallyl diphosphate + 2 oxidized [2Fe-2S]-[ferredoxin] + H2O = (2E)-4-hydroxy-3-methylbut-2-enyl diphosphate + 2 reduced [2Fe-2S]-[ferredoxin] + 2 H(+). It participates in isoprenoid biosynthesis; dimethylallyl diphosphate biosynthesis; dimethylallyl diphosphate from (2E)-4-hydroxy-3-methylbutenyl diphosphate: step 1/1. Its pathway is isoprenoid biosynthesis; isopentenyl diphosphate biosynthesis via DXP pathway; isopentenyl diphosphate from 1-deoxy-D-xylulose 5-phosphate: step 6/6. In terms of biological role, catalyzes the conversion of 1-hydroxy-2-methyl-2-(E)-butenyl 4-diphosphate (HMBPP) into a mixture of isopentenyl diphosphate (IPP) and dimethylallyl diphosphate (DMAPP). Acts in the terminal step of the DOXP/MEP pathway for isoprenoid precursor biosynthesis. In Synechococcus sp. (strain CC9605), this protein is 4-hydroxy-3-methylbut-2-enyl diphosphate reductase.